Reading from the N-terminus, the 198-residue chain is Formate-dependent nitrite reductase complex subunit NrfG (198 aa).

TPR repeat units lie at residues 73-106 (SEQW…RGEN) and 144-177 (ITAL…NSPR).

Required for formate-dependent nitrite reduction. Not required for the biosynthesis of any of the c-type cytochromes nor for the secretion of the periplasmic cytochromes. This chain is Formate-dependent nitrite reductase complex subunit NrfG (nrfG), found in Escherichia coli O157:H7.